The chain runs to 278 residues: Protein EXORDIUM-like 4 (278 aa).

Positions 1 to 23 (MAYNYRFAILLVLLSATVGFTAA) are cleaved as a signal peptide. Residue Asn-35 is glycosylated (N-linked (GlcNAc...) asparagine).

This sequence belongs to the EXORDIUM family.

It localises to the secreted. Its subcellular location is the extracellular space. The protein localises to the apoplast. Its function is as follows. May play a role in a brassinosteroid-dependent regulation of growth and development. The sequence is that of Protein EXORDIUM-like 4 (EXL4) from Arabidopsis thaliana (Mouse-ear cress).